The primary structure comprises 260 residues: Carbonic anhydrase 2 (260 aa).

Position 2 is an N-acetylserine (Ser-2). Position 2 is a phosphoserine (Ser-2). Residues 3–259 (HHWGYGKHNG…LKGRQVKASF (257 aa)) enclose the Alpha-carbonic anhydrase domain. The active-site Proton donor/acceptor is His-64. The Zn(2+) site is built by His-94, His-96, and His-119. 2 positions are modified to phosphoserine: Ser-165 and Ser-172. A substrate-binding site is contributed by 198–199 (TT).

This sequence belongs to the alpha-carbonic anhydrase family. In terms of assembly, interacts with SLC4A4 and SLC26A6. Interaction with SLC4A7 regulates SLC4A7 transporter activity. Zn(2+) is required as a cofactor.

It localises to the cytoplasm. Its subcellular location is the cell membrane. It carries out the reaction hydrogencarbonate + H(+) = CO2 + H2O. The catalysed reaction is urea = cyanamide + H2O. With respect to regulation, inhibited by acetazolamide. Catalyzes the reversible hydration of carbon dioxide. Can also hydrate cyanamide to urea. Involved in the regulation of fluid secretion into the anterior chamber of the eye. Essential for bone resorption and osteoclast differentiation. Contributes to intracellular pH regulation in the duodenal upper villous epithelium during proton-coupled peptide absorption. Stimulates the chloride-bicarbonate exchange activity of SLC26A6. In Oryctolagus cuniculus (Rabbit), this protein is Carbonic anhydrase 2 (CA2).